Consider the following 349-residue polypeptide: Protein RecA (349 aa).

An ATP-binding site is contributed by 64-71; sequence GPESSGKT.

It belongs to the RecA family.

It localises to the cytoplasm. Functionally, can catalyze the hydrolysis of ATP in the presence of single-stranded DNA, the ATP-dependent uptake of single-stranded DNA by duplex DNA, and the ATP-dependent hybridization of homologous single-stranded DNAs. It interacts with LexA causing its activation and leading to its autocatalytic cleavage. In Rhodopseudomonas palustris (strain ATCC BAA-98 / CGA009), this protein is Protein RecA.